We begin with the raw amino-acid sequence, 149 residues long: Large ribosomal subunit protein uL13 (149 aa).

The protein belongs to the universal ribosomal protein uL13 family. In terms of assembly, part of the 50S ribosomal subunit.

Its function is as follows. This protein is one of the early assembly proteins of the 50S ribosomal subunit, although it is not seen to bind rRNA by itself. It is important during the early stages of 50S assembly. The protein is Large ribosomal subunit protein uL13 of Cyanothece sp. (strain PCC 7425 / ATCC 29141).